We begin with the raw amino-acid sequence, 752 residues long: GTPase-activating protein rrc-1 (752 aa).

The SH3 domain maps to 165 to 244 (PAIAAAVVTK…PRDCVMLIDD (80 aa)). Residues 281–463 (LELTELFMRT…FCIENSDSLF (183 aa)) form the Rho-GAP domain. Disordered regions lie at residues 523-552 (STGE…ATFQ) and 582-609 (RSMR…GANN).

Functions as a GTPase-activating protein (GAP) for ced-10/RAC-1 and CDC42. The chain is GTPase-activating protein rrc-1 from Caenorhabditis briggsae.